The sequence spans 1193 residues: Tubulin monoglutamylase TTLL4 (1193 aa).

Disordered stretches follow at residues 1-37 and 468-535; these read MASA…EKPS and VHLD…CSSL. A compositionally biased stretch (polar residues) spans 24–34; sequence PSGTVSASPSE. Residues 472–482 show a composition bias toward basic and acidic residues; that stretch reads QPGKEPEEAKD. Over residues 502 to 515 the composition is skewed to acidic residues; it reads EPEDTEDELGDGLE. The TTL domain occupies 599–942; sequence RRLLRWKMST…VLPNMEDIIS (344 aa). Residue S686 is modified to Phosphoserine. ATP contacts are provided by residues K716, 722–723, 744–747, and 757–759; these read RG, QRYL, and KFD. Position 722 (R722) interacts with a protein. Position 783 (R783) interacts with L-glutamate. Residue 804–805 coordinates ATP; the sequence is TN. L-glutamate-binding residues include Y806, S807, and K828. D888, E901, and N903 together coordinate Mg(2+). The tract at residues 913-1027 is c-MTBD region; the sequence is PLDISIKGQM…RGQFERIFPS (115 aa). Residue K919 coordinates L-glutamate. Over residues 943–960 the composition is skewed to low complexity; the sequence is SSSSPSSSSGSSTSLPSS. Disordered stretches follow at residues 943–966 and 1092–1193; these read SSSS…DKCQ and MTTS…AVSS. 2 stretches are compositionally biased toward polar residues: residues 1092 to 1102 and 1131 to 1153; these read MTTSKGDGTPN and SQAG…NTSK. Over residues 1168-1182 the composition is skewed to low complexity; the sequence is SGQSSRLSAASASQS. Positions 1183–1193 are enriched in polar residues; it reads VTDSRLTAVSS.

The protein belongs to the tubulin--tyrosine ligase family. Requires Mg(2+) as cofactor. In terms of tissue distribution, highly expressed in testis. Expressed in brain, heart, kidney, liver, lung, muscle and spleen. In the brain, expressed in ependymal cilia, the cortex and the striatum. Expressed in blastomere.

The protein localises to the cytoplasm. Its subcellular location is the cell projection. It localises to the cilium. It is found in the cytoskeleton. The protein resides in the cilium basal body. It carries out the reaction L-glutamyl-[protein] + L-glutamate + ATP = gamma-L-glutamyl-L-glutamyl-[protein] + ADP + phosphate + H(+). Its function is as follows. Monoglutamylase which modifies both tubulin and non-tubulin proteins, adding a single glutamate on the gamma-carboxyl group of specific glutamate residues of target proteins. Involved in the side-chain initiation step of the polyglutamylation reaction but not in the elongation step. Preferentially modifies beta-tail tubulin over the alpha-tubulin. Monoglutamylates nucleosome assembly proteins NAP1L1 and NAP1L4. Monoglutamylates nucleotidyltransferase CGAS, leading to inhibition of CGAS catalytic activity, thereby preventing antiviral defense function. Involved in KLF4 glutamylation which impedes its ubiquitination, thereby leading to somatic cell reprogramming, pluripotency maintenance and embryogenesis. The polypeptide is Tubulin monoglutamylase TTLL4 (Mus musculus (Mouse)).